The sequence spans 1337 residues: Rho GTPase-activating protein 29 (1337 aa).

Positions 1–13 are enriched in polar residues; the sequence is MFRQGSNSGNKRM. 4 disordered regions span residues 1–20, 369–397, 513–551, and 564–654; these read MFRQ…ARLS, REEY…LEKK, SSKT…ADEV, and ERRS…TGLS. Residues 225–488 enclose the F-BAR domain; it reads EQVDLLLLKN…QAKKYEPGQR (264 aa). A coiled-coil region spans residues 326–443; it reads LLARKNDLDK…SEILAQIRKL (118 aa). A compositionally biased stretch (basic and acidic residues) spans 369–384; sequence REEYEKARSSTSRTEE. 2 stretches are compositionally biased toward polar residues: residues 525–545 and 568–579; these read QNST…SMDN and NSSIDMQVPRTQ. Residues 596–613 are compositionally biased toward low complexity; that stretch reads CSDSESAGGSSESRSMDS. Residues 676–723 form a Phorbol-ester/DAG-type zinc finger; sequence AHTHKLRKLRAPSKCRECDSLVVFHGAECEECSLACHKKCLETLAIQC. Residues 737 to 950 form the Rho-GAP domain; sequence IDFAQVVKNS…LLIKHHQMIF (214 aa). Positions 960 to 973 are enriched in polar residues; that stretch reads TSPTVSQASFGSSI. Disordered stretches follow at residues 960-983, 1016-1066, 1083-1114, 1149-1210, and 1273-1337; these read TSPT…LSRH, MKTG…AKPV, SRNT…TNFY, PPSG…KPSD, and TVSR…AHFV. Residues 974–983 show a composition bias toward basic and acidic residues; the sequence is QDKESKLSRH. Residues 1083-1092 show a composition bias toward basic and acidic residues; that stretch reads SRNTVEHDHS. 2 stretches are compositionally biased toward polar residues: residues 1161-1177 and 1295-1310; these read MASQ…SQSG and VTLS…TEEL. The segment covering 1325 to 1337 has biased composition (basic and acidic residues); that stretch reads RMQELEHREAHFV.

Functionally, GTPase activator for the Rho-type GTPases by converting them to an inactive GDP-bound state. Has strong activity toward RHOA, and weaker activity toward RAC1 and CDC42. The sequence is that of Rho GTPase-activating protein 29 (arhgap29) from Danio rerio (Zebrafish).